The chain runs to 1341 residues: DNA-directed RNA polymerase subunit beta (1341 aa).

This sequence belongs to the RNA polymerase beta chain family. In terms of assembly, the RNAP catalytic core consists of 2 alpha, 1 beta, 1 beta' and 1 omega subunit. When a sigma factor is associated with the core the holoenzyme is formed, which can initiate transcription.

The enzyme catalyses RNA(n) + a ribonucleoside 5'-triphosphate = RNA(n+1) + diphosphate. In terms of biological role, DNA-dependent RNA polymerase catalyzes the transcription of DNA into RNA using the four ribonucleoside triphosphates as substrates. The chain is DNA-directed RNA polymerase subunit beta from Vibrio cholerae serotype O1 (strain ATCC 39315 / El Tor Inaba N16961).